We begin with the raw amino-acid sequence, 290 residues long: Small ribosomal subunit protein uS11 (290 aa).

The interval 243-271 (DWEAAPAGFPATGEWSDAAPGAAAPNWDA) is disordered. Over residues 257 to 271 (WSDAAPGAAAPNWDA) the composition is skewed to low complexity.

Belongs to the universal ribosomal protein uS2 family. In terms of assembly, component of the small ribosomal subunit (SSU). Mature N.crassa ribosomes consist of a small (40S) and a large (60S) subunit. The 40S small subunit contains 1 molecule of ribosomal RNA (18S rRNA) and at least 32 different proteins. The large 60S subunit contains 3 rRNA molecules (26S, 5.8S and 5S rRNA) and at least 42 different proteins. Interacts with rps21.

The protein resides in the cytoplasm. Functionally, component of the ribosome, a large ribonucleoprotein complex responsible for the synthesis of proteins in the cell. The small ribosomal subunit (SSU) binds messenger RNAs (mRNAs) and translates the encoded message by selecting cognate aminoacyl-transfer RNA (tRNA) molecules. The large subunit (LSU) contains the ribosomal catalytic site termed the peptidyl transferase center (PTC), which catalyzes the formation of peptide bonds, thereby polymerizing the amino acids delivered by tRNAs into a polypeptide chain. The nascent polypeptides leave the ribosome through a tunnel in the LSU and interact with protein factors that function in enzymatic processing, targeting, and the membrane insertion of nascent chains at the exit of the ribosomal tunnel. uS2 is required for the assembly and/or stability of the 40S ribosomal subunit. Required for the processing of the 20S rRNA-precursor to mature 18S rRNA in a late step of the maturation of 40S ribosomal subunits. This chain is Small ribosomal subunit protein uS11, found in Neurospora crassa (strain ATCC 24698 / 74-OR23-1A / CBS 708.71 / DSM 1257 / FGSC 987).